Consider the following 37-residue polypeptide: MKVRASVKKLCRNCKIVKREGVVRVLCSDPKHKQRQG.

The protein belongs to the bacterial ribosomal protein bL36 family.

This is Large ribosomal subunit protein bL36 from Pasteurella multocida (strain Pm70).